The primary structure comprises 177 residues: Large ribosomal subunit protein uL6 (177 aa).

Belongs to the universal ribosomal protein uL6 family. As to quaternary structure, part of the 50S ribosomal subunit.

This protein binds to the 23S rRNA, and is important in its secondary structure. It is located near the subunit interface in the base of the L7/L12 stalk, and near the tRNA binding site of the peptidyltransferase center. The chain is Large ribosomal subunit protein uL6 from Allorhizobium ampelinum (strain ATCC BAA-846 / DSM 112012 / S4) (Agrobacterium vitis (strain S4)).